We begin with the raw amino-acid sequence, 220 residues long: Putative tyrosine-protein phosphatase 1 (220 aa).

The Tyrosine-protein phosphatase domain occupies 67 to 218 (FKVPLNAELF…LLARKHVRGQ (152 aa)).

This sequence belongs to the protein-tyrosine phosphatase family. Non-receptor class CDC14 subfamily.

It carries out the reaction O-phospho-L-tyrosyl-[protein] + H2O = L-tyrosyl-[protein] + phosphate. Its function is as follows. Could be inactive as the active site cysteine is modified to tryptophan. The protein is Putative tyrosine-protein phosphatase 1 (PTP-1) of Orgyia pseudotsugata multicapsid polyhedrosis virus (OpMNPV).